Reading from the N-terminus, the 291-residue chain is Tyrosine recombinase XerA (291 aa).

Residues 9 to 102 (PESGDLYNAF…AVRRFLKWIN (94 aa)) form the Core-binding (CB) domain. The 165-residue stretch at 115 to 279 (KEVKALDEIQ…VLDDLRNEYL (165 aa)) folds into the Tyr recombinase domain. Catalysis depends on residues R150, K175, H231, R234, and H257. The active-site O-(3'-phospho-DNA)-tyrosine intermediate is the Y266.

Belongs to the 'phage' integrase family. XerA subfamily.

Its subcellular location is the cytoplasm. Its function is as follows. Site-specific tyrosine recombinase, which acts by catalyzing the cutting and rejoining of the recombining DNA molecules. Probably involved in the resolution of chromosome dimers. Binds to the dif site. The sequence is that of Tyrosine recombinase XerA from Saccharolobus solfataricus (strain ATCC 35092 / DSM 1617 / JCM 11322 / P2) (Sulfolobus solfataricus).